Here is a 123-residue protein sequence, read N- to C-terminus: uncharacterized protein (123 aa).

A helical transmembrane segment spans residues 5–25 (GTLVIIFAIVLILCIMLLFFY). The disordered stretch occupies residues 32–53 (KPSVLPPPIPPPTPPPSKKKYD). Pro residues predominate over residues 35 to 47 (VLPPPIPPPTPPP).

It belongs to the asfivirus CP123L family.

Its subcellular location is the host membrane. It localises to the virion. This is an uncharacterized protein from Ornithodoros (relapsing fever ticks).